Consider the following 607-residue polypeptide: Arginine decarboxylase (607 aa).

Lys-104 is subject to N6-(pyridoxal phosphate)lysine. Residue 290–300 participates in substrate binding; it reads LDCGGGLGVDY.

It belongs to the Orn/Lys/Arg decarboxylase class-II family. SpeA subfamily. It depends on pyridoxal 5'-phosphate as a cofactor. Mg(2+) serves as cofactor.

The enzyme catalyses L-arginine + H(+) = agmatine + CO2. The protein operates within amine and polyamine biosynthesis; agmatine biosynthesis; agmatine from L-arginine: step 1/1. The protein is Arginine decarboxylase (SPE1) of Avena sativa (Oat).